The primary structure comprises 1017 residues: Semaphorin-6D (1017 aa).

An N-terminal signal peptide occupies residues 1 to 20; sequence MRVFLLCAYILLLMISQLRA. Residues 21–606 lie on the Extracellular side of the membrane; it reads VSFPEDDEPL…GESNQMVHMN (586 aa). The Sema domain maps to 27-512; it reads DEPLNTVDYH…FSSCVIRIPL (486 aa). N51 is a glycosylation site (N-linked (GlcNAc...) asparagine). Cystine bridges form between C108/C118, C136/C145, C259/C370, and C284/C329. N-linked (GlcNAc...) asparagine glycosylation is present at N283. 2 N-linked (GlcNAc...) asparagine glycosylation sites follow: N435 and N461. Cystine bridges form between C477–C506, C515–C533, C521–C568, and C525–C541. One can recognise a PSI domain in the interval 514 to 569; it reads RCERYGSCKKSCIASRDPYCGWLSQGSCGRVTPGMLAEGYEQDAEFGNTAHLGDCH. The chain crosses the membrane as a helical span at residues 607-627; the sequence is VLITCVFAAFVLGAFIAGVAV. The Cytoplasmic portion of the chain corresponds to 628–1017; sequence YCYRDMFVRK…SVRPLNKYTY (390 aa). Phosphoserine is present on residues S667, S678, and S688. Disordered stretches follow at residues 688–719, 731–769, 783–818, and 873–912; these read SRKE…PTPE, AMKS…GHIP, TSFS…RSVD, and LYSP…HKNS. Residue T717 is modified to Phosphothreonine. Positions 734–749 are enriched in basic and acidic residues; it reads SHSEKAHGHGASRKET. Phosphoserine occurs at positions 875, 901, and 927. The segment covering 875 to 886 has biased composition (polar residues); sequence SPPSTLPRNSPT. Residues 965–981 show a composition bias toward polar residues; the sequence is LQPSLSRQSSYTSNGTL. A disordered region spans residues 965 to 1017; sequence LQPSLSRQSSYTSNGTLPRTGLKRTPSLKPDVPPKPSFVPQTPSVRPLNKYTY.

Belongs to the semaphorin family.

The protein resides in the cell membrane. Functionally, shows growth cone collapsing activity on dorsal root ganglion (DRG) neurons in vitro. May be a stop signal for the DRG neurons in their target areas, and possibly also for other neurons. May also be involved in the maintenance and remodeling of neuronal connections. Ligand of TREM2 with PLXNA1 as coreceptor in dendritic cells, plays a role in the generation of immune responses and skeletal homeostasis. The polypeptide is Semaphorin-6D (SEMA6D) (Pongo abelii (Sumatran orangutan)).